A 103-amino-acid polypeptide reads, in one-letter code: OMEGA-ectatommitoxin(02)-Rm1d (103 aa).

A signal peptide spans 1–30; the sequence is MKDSYISIVIAYLMVTFILVSSMPIEGEKR. 3 cysteine pairs are disulfide-bonded: Cys-39–Cys-54, Cys-49–Cys-70, and Cys-72–Cys-81. The region spanning 43–82 is the EGF-like domain; that stretch reads LNDENYCFNGKCVHLVAQDEPGKPYYSCICDEFYIGERCG.

Belongs to the EGF domain peptide family. Expressed by the venom gland.

It localises to the secreted. In terms of biological role, ant peptide with probable defensive activity which acts as a potent agonist of the mammalian epidermal growth factor receptor (EGFR). Mimics, both structurally and functionally, vertebrate epidermal growth factor (EGF) peptide hormones. In vivo, intraplantar injection in mice causes long-lasting (several days) hypersensitivity of the injected paw to both mechanical and thermal stimuli. Its long-lasting effect is unusual for venom toxins whose effects are usually immediate. One possible explanation is that it would reduce the duration of a nest attack, discourage future attacks, or enhance the actions of subsequent exposure to other pain-inducing venom peptides. In Rhytidoponera metallica (Australian green-headed ant), this protein is OMEGA-ectatommitoxin(02)-Rm1d.